The sequence spans 1960 residues: Zinc finger protein 638 (1960 aa).

Residues 1–137 are disordered; sequence MSRPRFNPRG…SPKVQSRYTK (137 aa). A compositionally biased stretch (pro residues) spans 19–31; that stretch reads APNPPGMRPPGPF. Arginine 47, arginine 49, and arginine 54 each carry asymmetric dimethylarginine. Positions 60–75 are enriched in polar residues; sequence SYQNMGPQRMNVQVTQ. Basic and acidic residues predominate over residues 76-89; the sequence is HRTDPRLTKEKLDF. Over residues 117–137 the composition is skewed to polar residues; the sequence is KQSSVTQVTEQSPKVQSRYTK. A phosphoserine mark is found at serine 128 and serine 288. Residue lysine 291 forms a Glycyl lysine isopeptide (Lys-Gly) (interchain with G-Cter in SUMO2) linkage. Residues serine 298, serine 367, serine 381, and serine 418 each carry the phosphoserine modification. Positions 352–373 are disordered; the sequence is KSVISSADAHGGPTESKKDYQS. Disordered stretches follow at residues 463–673, 749–804, and 827–899; these read NPEI…QSLS, PGKK…STVK, and KASI…KESE. Residues 468 to 483 are compositionally biased toward basic and acidic residues; that stretch reads PSRRNESNRKENETPR. An involved in localization to nuclear speckles region spans residues 470–573; it reads RRNESNRKEN…ERTSRKSVRS (104 aa). Basic residues predominate over residues 484–556; that stretch reads RRSHSPSPRH…SRNLLRRSPK (73 aa). Serine 554 carries the phosphoserine modification. 2 stretches are compositionally biased toward basic and acidic residues: residues 565–583 and 591–602; these read RTSR…EDGG and EVTKQKHTETVD. A phosphoserine mark is found at serine 606 and serine 615. Positions 618-628 are enriched in low complexity; it reads KPSAKSLSSVK. At serine 637 the chain carries Phosphoserine. One can recognise an RRM 1 domain in the interval 676–751; that stretch reads SILLVSELPE…KSVKVCVPGK (76 aa). Positions 755-782 are enriched in basic and acidic residues; the sequence is QNKEMKKKPSDIKKSSASALKKETDASK. Lysine 775 participates in a covalent cross-link: Glycyl lysine isopeptide (Lys-Gly) (interchain with G-Cter in SUMO2). The segment covering 783–802 has biased composition (low complexity); that stretch reads TMETVSSSSSAKSGQIKSST. Basic and acidic residues-rich tracts occupy residues 838 to 854, 867 to 879, and 888 to 899; these read KSLE…KDSN, ASSE…KSAE, and ATEKEPVNKESE. The region spanning 902 to 976 is the RRM 2 domain; it reads SVVFISNLPN…NQLSISMAPE (75 aa). Residues 1082 to 1092 are compositionally biased toward basic and acidic residues; sequence SEVQRKNDLEL. Disordered regions lie at residues 1082–1151, 1396–1420, 1442–1462, 1484–1527, and 1550–1583; these read SEVQ…EEPK, TVVS…PKPV, TRSG…GVNR, TKQS…KSKE, and PSQA…KGKT. Serine 1099 is subject to Phosphoserine. The span at 1140-1151 shows a compositional bias: basic and acidic residues; the sequence is VHQEELGKEEPK. The span at 1399–1409 shows a compositional bias: low complexity; that stretch reads SSPKAKSTPSK. At serine 1400 the chain carries Phosphoserine. A compositionally biased stretch (polar residues) spans 1442–1459; that stretch reads TRSGLAESNSKSKPTQIG. 2 stretches are compositionally biased toward basic and acidic residues: residues 1484 to 1503 and 1518 to 1527; these read TKQS…DDSN and TTDRSSKSKE. Phosphoserine is present on residues serine 1635 and serine 1661. 2 disordered regions span residues 1763-1898 and 1930-1960; these read EVGD…SDVP and KSTR…RSSR. A compositionally biased stretch (basic and acidic residues) spans 1772-1790; that stretch reads NDSKVELARGKIEHHTDKK. Lysine 1804 participates in a covalent cross-link: Glycyl lysine isopeptide (Lys-Gly) (interchain with G-Cter in SUMO2). A compositionally biased stretch (polar residues) spans 1806–1818; the sequence is DSFSQVGPGSETV. The segment covering 1819–1831 has biased composition (basic and acidic residues); it reads TQKDLKTMPERHL. Serine 1864 is subject to Phosphoserine. Residues 1870-1885 show a composition bias toward basic and acidic residues; it reads AELKDSEPDEKRRKTQ. The Matrin-type zinc-finger motif lies at 1876-1906; it reads EPDEKRRKTQDSSVGKSMTSDVPGDLDFLVP. Over residues 1886-1895 the composition is skewed to polar residues; it reads DSSVGKSMTS. Positions 1936 to 1960 are enriched in basic and acidic residues; the sequence is QNTEKFMAKQRKEKEQNETEERSSR.

Interacts with FHL2. Interacts with CEBPA, CEBPD and CEBPG. Interacts with MPHOSPH8 and TASOR components of the HUSH complex; leading to recruitment of the HUSH complex. Interacts with SETDB1. Interacts with HDAC1. Interacts with HDAC4.

Its subcellular location is the nucleus speckle. Functionally, transcription factor that binds to cytidine clusters in double-stranded DNA. Plays a key role in the silencing of unintegrated retroviral DNA: some part of the retroviral DNA formed immediately after infection remains unintegrated in the host genome and is transcriptionally repressed. Mediates transcriptional repression of unintegrated viral DNA by specifically binding to the cytidine clusters of retroviral DNA and mediating the recruitment of chromatin silencers, such as the HUSH complex, SETDB1 and the histone deacetylases HDAC1 and HDAC4. Acts as an early regulator of adipogenesis by acting as a transcription cofactor of CEBPs (CEBPA, CEBPD and/or CEBPG), controlling the expression of PPARG and probably of other proadipogenic genes, such as SREBF1. May also regulate alternative splicing of target genes during adipogenesis. The chain is Zinc finger protein 638 from Mus musculus (Mouse).